An 861-amino-acid chain; its full sequence is Interleukin-12 receptor subunit beta-2 (861 aa).

The N-terminal stretch at 1–23 (MARTVCGCSWALIFIIMSLLVKA) is a signal peptide. The Extracellular segment spans residues 24-622 (KIDVCKRGDV…REFCLQGKAN (599 aa)). 4 N-linked (GlcNAc...) asparagine glycosylation sites follow: Asn-48, Asn-129, Asn-166, and Asn-271. Fibronectin type-III domains lie at 126 to 224 (QPQN…VVRP), 226 to 317 (PPWD…TQTP), 318 to 415 (EKEP…NIAD), 423 to 520 (APQQ…KHKA), and 521 to 620 (PLSG…LQGK). Residues 305–309 (WSDWS) carry the WSXWS motif motif. Asn-347, Asn-376, and Asn-480 each carry an N-linked (GlcNAc...) asparagine glycan. The helical transmembrane segment at 623–643 (WSTFVAPSICIAVITVGVFSM) threads the bilayer. At 644-861 (RCFRQKVFVL…LKMGCGSLML (218 aa)) the chain is on the cytoplasmic side. A Box 1 motif motif is present at residues 662 to 670 (CSREIPDPA). Positions 718–761 (FRRPHHPNWPGKGQRLQGRHASEEDTGSSASSPPPPRALTAETG) are disordered. Position 800 is a phosphotyrosine (Tyr-800).

It belongs to the type I cytokine receptor family. Type 2 subfamily. Heterodimer/heterooligomer; disulfide-linked. The functional high affinity IL12 receptor is composed of I12RB1 and IL12RB2. Il12RB2 binds JAK2 (via its N-terminal) through a membrane-proximal region of the cytoplasmic domain. In terms of processing, on IL12 stimulation, phosphorylated on C-terminal tyrosine residues.

It localises to the membrane. In terms of biological role, receptor for interleukin-12. This subunit is the signaling component coupling to the JAK2/STAT4 pathway. The chain is Interleukin-12 receptor subunit beta-2 (IL12RB2) from Sus scrofa (Pig).